A 140-amino-acid chain; its full sequence is Nucleoside diphosphate kinase (140 aa).

ATP contacts are provided by lysine 11, phenylalanine 59, arginine 87, threonine 93, arginine 104, and asparagine 114. The Pros-phosphohistidine intermediate role is filled by histidine 117.

It belongs to the NDK family. As to quaternary structure, homotetramer. Mg(2+) is required as a cofactor.

Its subcellular location is the cytoplasm. It carries out the reaction a 2'-deoxyribonucleoside 5'-diphosphate + ATP = a 2'-deoxyribonucleoside 5'-triphosphate + ADP. The catalysed reaction is a ribonucleoside 5'-diphosphate + ATP = a ribonucleoside 5'-triphosphate + ADP. Functionally, major role in the synthesis of nucleoside triphosphates other than ATP. The ATP gamma phosphate is transferred to the NDP beta phosphate via a ping-pong mechanism, using a phosphorylated active-site intermediate. This is Nucleoside diphosphate kinase from Rhizobium meliloti (strain 1021) (Ensifer meliloti).